The sequence spans 216 residues: UPF0711 protein C18orf21 homolog (216 aa).

Disordered regions lie at residues 118 to 185 (RSFL…ASKT) and 197 to 216 (SQSE…LSSL). Polar residues predominate over residues 124–136 (LKSNPTTPTSKLS). A Phosphoserine modification is found at Ser126. Phosphothreonine occurs at positions 130 and 139. 2 stretches are compositionally biased toward polar residues: residues 145–157 (PSSA…SGSK) and 167–182 (TPTS…SKNA). Positions 200–209 (ESKKNPKMDF) are enriched in basic and acidic residues.

It belongs to the UPF0711 family.

This Bos taurus (Bovine) protein is UPF0711 protein C18orf21 homolog.